Consider the following 608-residue polypeptide: MATGQLFSRTTQALFYNYKQLPVQRMLDFDFLCGRETPSVAGIINPGSEGFQKLFFGQEEIAIPVHAAIEAACAAHPTADVFINFASFRSAAASSMAALKQPTIKVVAIIAEGVPESDTKQLIAYARANNKVVIGPATVGGIQAGAFKIGDTAGTIDNIIQCKLYRPGSVGFVSKSGGMSNEMYNTVARVTDGIYEGIAIGGDVFPGSTLSDHILRFNNIPQIKMMVVLGELGGRDEYSLVEALKEGKVNKPVVAWVSGTCARLFKSEVQFGHAGAKSGGEMESAQAKNQALIDAGAIVPTSFEALESAIKETFEKLVEEGKVSPIKEVIPPQIPEDLNSAIKSGKVRAPTHIISTISDDRGEEPCYAGVPMSSIIEQGYGVGDVISLLWFKRSLPRYCTKFIEICIMLCADHGPCVSGAHNTIVTARAGKDLVSSLVSGLLTIGPRFGGAIDDAARYFKDACDRNLTPYEFVEGMKKKGIRVPGIGHRIKSRDNRDKRVELLQKFARSNFPSVKYMEYAVTVETYTLSKANNLVLNVDGAIGSLFLDLLAGSGMFTKQEIDEIVQIGYLNGLFVLARSIGLIGHTFDQKRLKQPLYRHPWEDVLYTK.

Residues 214-234 (ILRFNNIPQIKMMVVLGELGG) and 265-291 (FKSEVQFGHAGAKSGGEMESAQAKNQA) contribute to the ATP site. Glu-231 is a Mg(2+) binding site. Catalysis depends on His-273, which acts as the Tele-phosphohistidine intermediate. 292-302 (LIDAGAIVPTS) provides a ligand contact to CoA.

This sequence belongs to the succinate/malate CoA ligase alpha subunit family. As to quaternary structure, heterooctamer of 4 alpha and 4 beta chains. As to expression, expressed in trichomes, epidermal leaf cells, anther tapetal cells, stigma and in young vascular bundles of expanding leaves, cotyledons, roots, pedicel of flowers and siliques.

It localises to the cytoplasm. The protein localises to the cytosol. The enzyme catalyses oxaloacetate + acetyl-CoA + ADP + phosphate = citrate + ATP + CoA. Functionally, ATP citrate-lyase is the primary enzyme responsible for the synthesis of cytosolic acetyl-CoA, used for the elongation of fatty acids and biosynthesis of isoprenoids, flavonoids and malonated derivatives. May supply substrate to the cytosolic acetyl-CoA carboxylase, which generates the malonyl-CoA used for the synthesis of a multitude of compounds, including very long chain fatty acids and flavonoids. Required for normal growth and development and elongation of C18 fatty acids to C20 to C24 fatty acids in seeds. n contrast to all known animal ACL enzymes having a homomeric structure, plant ACLs are composed of alpha and beta chains. This is ATP-citrate synthase beta chain protein 2 from Arabidopsis thaliana (Mouse-ear cress).